Reading from the N-terminus, the 251-residue chain is CDP-diacylglycerol pyrophosphatase (251 aa).

Residues 5-25 (GYFLLAVIVIVAAAGVGYWKF) form a helical membrane-spanning segment.

It belongs to the Cdh family.

Its subcellular location is the cell inner membrane. The catalysed reaction is a CDP-1,2-diacyl-sn-glycerol + H2O = a 1,2-diacyl-sn-glycero-3-phosphate + CMP + 2 H(+). It participates in phospholipid metabolism; CDP-diacylglycerol degradation; phosphatidate from CDP-diacylglycerol: step 1/1. This is CDP-diacylglycerol pyrophosphatase from Salmonella typhi.